Consider the following 199-residue polypeptide: MSWLLGYMDPTEPSFVAAVITIVFNPLFWNVVARWEQRTRKLSRAFGSPHLACYSLGICILLLNILRSHCFTQAMMSQPKMEGLDNHTTYFLGLAFLGWGFVFVLSSFYALGFTGTFLGDYFGILKESRVTTFPFSVLDNPMYWGSTANYLGWALMHASPTGLLLTVLVAIVYVVALLYEEPFTAEIYRQKATRLHKRS.

Topologically, residues 1–12 (MSWLLGYMDPTE) are lumenal. Residues 13 to 33 (PSFVAAVITIVFNPLFWNVVA) constitute an intramembrane region (helical). The Lumenal segment spans residues 34–45 (RWEQRTRKLSRA). Residues 46–66 (FGSPHLACYSLGICILLLNIL) form a helical membrane-spanning segment. The Cytoplasmic portion of the chain corresponds to 67–93 (RSHCFTQAMMSQPKMEGLDNHTTYFLG). The chain crosses the membrane as a helical span at residues 94 to 114 (LAFLGWGFVFVLSSFYALGFT). Position 98–100 (98–100 (GWG)) interacts with S-adenosyl-L-methionine. Residues 115-157 (GTFLGDYFGILKESRVTTFPFSVLDNPMYWGSTANYLGWALMH) are Lumenal-facing. A helical membrane pass occupies residues 158–178 (ASPTGLLLTVLVAIVYVVALL). Over 179-199 (YEEPFTAEIYRQKATRLHKRS) the chain is Cytoplasmic. 180 to 181 (EE) is a binding site for S-adenosyl-L-methionine.

This sequence belongs to the class VI-like SAM-binding methyltransferase superfamily. PEMT/PEM2 methyltransferase family. Expressed in liver (at protein level).

It localises to the endoplasmic reticulum membrane. Its subcellular location is the mitochondrion membrane. The catalysed reaction is a 1,2-diacyl-sn-glycero-3-phospho-N-methylethanolamine + S-adenosyl-L-methionine = a 1,2-diacyl-sn-glycero-3-phospho-N,N-dimethylethanolamine + S-adenosyl-L-homocysteine + H(+). It carries out the reaction a 1,2-diacyl-sn-glycero-3-phospho-N,N-dimethylethanolamine + S-adenosyl-L-methionine = a 1,2-diacyl-sn-glycero-3-phosphocholine + S-adenosyl-L-homocysteine + H(+). It catalyses the reaction a 1,2-diacyl-sn-glycero-3-phosphoethanolamine + S-adenosyl-L-methionine = a 1,2-diacyl-sn-glycero-3-phospho-N-methylethanolamine + S-adenosyl-L-homocysteine + H(+). The enzyme catalyses 1,2-di-(9Z-octadecenoyl)-sn-glycero-3-phosphoethanolamine + S-adenosyl-L-methionine = 1,2-di-(9Z-octadecenoyl)-sn-glycero-3-phospho-N-methylethanolamine + S-adenosyl-L-homocysteine + H(+). The catalysed reaction is 1,2-di-(9Z-octadecenoyl)-sn-glycero-3-phospho-N-methylethanolamine + S-adenosyl-L-methionine = 1,2-di-(9Z-octadecenoyl)-sn-glycero-3-phospho-N,N-dimethylethanolamine + S-adenosyl-L-homocysteine + H(+). It carries out the reaction 1,2-di-(9Z-octadecenoyl)-sn-glycero-3-phospho-N,N-dimethylethanolamine + S-adenosyl-L-methionine = 1,2-di-(9Z-octadecenoyl)-sn-glycero-3-phosphocholine + S-adenosyl-L-homocysteine + H(+). It catalyses the reaction 1,2-di-(9Z,12Z-octadecadienoyl)-sn-glycero-3-phosphoethanolamine + S-adenosyl-L-methionine = 1,2-di-(9Z,12Z-octadecadienoyl)-sn-glycero-3-phospho-N-methylethanolamine + S-adenosyl-L-homocysteine + H(+). The enzyme catalyses 1,2-di-(9Z,12Z-octadecadienoyl)-sn-glycero-3-phospho-N-methylethanolamine + S-adenosyl-L-methionine = 1,2-di-(9Z,12Z-octadecadienoyl)-sn-glycero-3-phospho-N,N-dimethylethanolamine + S-adenosyl-L-homocysteine + H(+). The catalysed reaction is 1,2-di-(9Z,12Z-octadecadienoyl)-sn-glycero-3-phospho-N,N-dimethylethanolamine + S-adenosyl-L-methionine = 1,2-di-(9Z,12Z-octadecadienoyl)-sn-glycero-3-phosphocholine + S-adenosyl-L-homocysteine + H(+). It carries out the reaction 1,2-di-(9Z,12Z,15Z-octadecatrienoyl)-sn-glycero-3-phosphoethanolamine + S-adenosyl-L-methionine = 1,2-di-(9Z,12Z,15Z-octadecatrienoyl)-sn-glycero-3-phospho-N-methylethanolamine + S-adenosyl-L-homocysteine + H(+). It catalyses the reaction 1,2-di-(9Z,12Z,15Z-octadecatrienoyl)-sn-glycero-3-phospho-N-methylethanolamine + S-adenosyl-L-methionine = 1,2-di-(9Z,12Z,15Z-octadecatrienoyl)-sn-glycero-3-phospho-N,N-dimethylethanolamine + S-adenosyl-L-homocysteine + H(+). The enzyme catalyses 1,2-di-(9Z,12Z,15Z-octadecatrienoyl)-sn-glycero-3-phospho-N,N-dimethylethanolamine + S-adenosyl-L-methionine = 1,2-di-(9Z,12Z,15Z-octadecatrienoyl)-sn-glycero-3-phosphocholine + S-adenosyl-L-homocysteine + H(+). The catalysed reaction is 1-hexadecanoyl-2-(4Z,7Z,10Z,13Z,16Z,19Z-docosahexaenoyl)-sn-glycero-3-phosphoethanolamine + S-adenosyl-L-methionine = 1-hexadecanoyl-2-(4Z,7Z,10Z,13Z,16Z,19Z-docosahexaenoyl)-sn-glycero-3-phospho-N-methylethanolamine + S-adenosyl-L-homocysteine + H(+). It carries out the reaction 1-hexadecanoyl-2-(4Z,7Z,10Z,13Z,16Z,19Z-docosahexaenoyl)-sn-glycero-3-phospho-N-methylethanolamine + S-adenosyl-L-methionine = 1-hexadecanoyl-2-(4Z,7Z,10Z,13Z,16Z,19Z-docosahexaenoyl)-sn-glycero-3-phospho-N,N-dimethylethanolamine + S-adenosyl-L-homocysteine + H(+). It catalyses the reaction 1-hexadecanoyl-2-(4Z,7Z,10Z,13Z,16Z,19Z-docosahexaenoyl)-sn-glycero-3-phospho-N,N-dimethylethanolamine + S-adenosyl-L-methionine = 1-hexadecanoyl-2-(4Z,7Z,10Z,13Z,16Z,19Z-docosahexaenoyl)-sn-glycero-3-phosphocholine + S-adenosyl-L-homocysteine + H(+). It participates in phospholipid metabolism; phosphatidylcholine biosynthesis. Its function is as follows. Catalyzes the three sequential steps of the methylation pathway for the biosynthesis of phosphatidylcholine, a critical and essential component for membrane structure. Uses S-adenosylmethionine (S-adenosyl-L-methionine, SAM or AdoMet) as the methyl group donor for the methylation of phosphatidylethanolamine (1,2-diacyl-sn-glycero-3-phosphoethanolamine, PE) to phosphatidylmonomethylethanolamine (1,2-diacyl-sn-glycero-3-phospho-N-methylethanolamine, PMME), PMME to phosphatidyldimethylethanolamine (1,2-diacyl-sn-glycero-3-phospho-N,N-dimethylethanolamine, PDME), and PDME to phosphatidylcholine (1,2-diacyl-sn-glycero-3-phosphocholine, PC), producing S-adenosyl-L-homocysteine in each step. This chain is Phosphatidylethanolamine N-methyltransferase, found in Mus musculus (Mouse).